A 425-amino-acid polypeptide reads, in one-letter code: Adenosylhomocysteinase (425 aa).

Thr60, Asp132, and Glu157 together coordinate substrate. 158–160 serves as a coordination point for NAD(+); sequence TTT. Positions 187 and 191 each coordinate substrate. Residues Asn192, 221–226, Glu244, Asn279, 300–302, and Asn347 contribute to the NAD(+) site; these read GYGWCG and SGH.

The protein belongs to the adenosylhomocysteinase family. NAD(+) serves as cofactor.

It is found in the cytoplasm. The enzyme catalyses S-adenosyl-L-homocysteine + H2O = L-homocysteine + adenosine. The protein operates within amino-acid biosynthesis; L-homocysteine biosynthesis; L-homocysteine from S-adenosyl-L-homocysteine: step 1/1. Functionally, may play a key role in the regulation of the intracellular concentration of adenosylhomocysteine. In Synechocystis sp. (strain ATCC 27184 / PCC 6803 / Kazusa), this protein is Adenosylhomocysteinase.